The sequence spans 206 residues: Holliday junction branch migration complex subunit RuvA (206 aa).

The tract at residues 1–64 (MIGRLTGNLV…ETSQQLFGFI (64 aa)) is domain I. Residues 65 to 142 (DQQDREFFRM…SWQVTPSVDA (78 aa)) are domain II. Residues 143–154 (TGSLVALDSAAP) form a flexible linker region. A domain III region spans residues 155–206 (SQNAIVAEAESALVALGYKPVEASKAVARVTSDEITRSEDLIRLALRNMIPA).

Belongs to the RuvA family. Homotetramer. Forms an RuvA(8)-RuvB(12)-Holliday junction (HJ) complex. HJ DNA is sandwiched between 2 RuvA tetramers; dsDNA enters through RuvA and exits via RuvB. An RuvB hexamer assembles on each DNA strand where it exits the tetramer. Each RuvB hexamer is contacted by two RuvA subunits (via domain III) on 2 adjacent RuvB subunits; this complex drives branch migration. In the full resolvosome a probable DNA-RuvA(4)-RuvB(12)-RuvC(2) complex forms which resolves the HJ.

It is found in the cytoplasm. In terms of biological role, the RuvA-RuvB-RuvC complex processes Holliday junction (HJ) DNA during genetic recombination and DNA repair, while the RuvA-RuvB complex plays an important role in the rescue of blocked DNA replication forks via replication fork reversal (RFR). RuvA specifically binds to HJ cruciform DNA, conferring on it an open structure. The RuvB hexamer acts as an ATP-dependent pump, pulling dsDNA into and through the RuvAB complex. HJ branch migration allows RuvC to scan DNA until it finds its consensus sequence, where it cleaves and resolves the cruciform DNA. This chain is Holliday junction branch migration complex subunit RuvA, found in Teredinibacter turnerae (strain ATCC 39867 / T7901).